The chain runs to 389 residues: Inactive serine/threonine-protein kinase ZRK12 (389 aa).

One can recognise a Protein kinase domain in the interval 41–342; that stretch reads SADEIRKATN…ETQFDSHQDI (302 aa). ATP-binding positions include 47-55 and Lys-84; that span reads KATNNFGVS. Position 129 is a phosphotyrosine (Tyr-129). Residue Thr-214 is modified to Phosphothreonine. Tyr-222 is subject to Phosphotyrosine.

This sequence belongs to the protein kinase superfamily. Ser/Thr protein kinase family.

Functionally, together with RPP13L4/ZAR1, involved in the regulation of the ambient temperature-sensitive intersection of growth and immune response in the absence of pathogens. This Arabidopsis thaliana (Mouse-ear cress) protein is Inactive serine/threonine-protein kinase ZRK12.